Here is a 1441-residue protein sequence, read N- to C-terminus: uncharacterized protein (1441 aa).

Disordered stretches follow at residues 1-95, 150-204, 224-289, 401-477, 529-661, 680-760, 776-810, 849-899, 980-1118, 1161-1185, 1209-1321, 1348-1402, and 1421-1441; these read MGFL…EVIS, NGGI…QQQF, KPHQ…GEGE, HSNG…QLHQ, RHES…QPQQ, LNKD…KSQT, RKSSDSLNSSNSNIPITNISPGRQSQQQQQQHIQQ, QQQF…TQQL, RGGS…DNNN, KSLKNSFNNNNNENINNNNNENENN, NIES…YRSY, GHNS…HIFF, and LKFNQQNNSNNNDDLGGSILE. A compositionally biased stretch (low complexity) spans 19–38; that stretch reads NDNSFDGGSSSYNNNNNNNN. Over residues 39-56 the composition is skewed to polar residues; it reads QPITYTPTAIRSPNNKTM. 6 stretches are compositionally biased toward low complexity: residues 57-91, 153-187, 227-283, 416-445, 555-564, and 572-635; these read SQSQTSIPTLSSSPSLNYPSSPPNNNNNNNNGNGN, ISQPTTPISSPSQPFQSVQPNLIIPTTPTTTTTTP, QQQQ…SLQN, NNNNNNNNNNNNNNGNNSNNGNINNNGINN, GNTDGVNIDN, and NNNN…TNNT. Residues 636–645 show a composition bias toward polar residues; sequence ATPSVINGDS. 2 stretches are compositionally biased toward low complexity: residues 648-661 and 680-700; these read QEQPQQSQQQQPQQ and LNKDSNNVDNNNNNNNIDDNN. Over residues 703–720 the composition is skewed to basic and acidic residues; the sequence is SREEMENILKKSQQDSNK. Positions 729–751 are enriched in polar residues; it reads EDSNSGSPTFQDFQSSAAASNVS. Composition is skewed to low complexity over residues 780–810 and 849–880; these read DSLNSSNSNIPITNISPGRQSQQQQQQHIQQ and QQQFQFQQNSVSSQSLQSLNGGNNNNNSNSGS. Positions 881 to 892 are enriched in gly residues; the sequence is INGGSNSGGGGV. Positions 981–994 are enriched in polar residues; sequence GGSTNRTTPPFLTP. Low complexity predominate over residues 995-1067; the sequence is NTSQTNLSSL…NKQTANNTTN (73 aa). Residues 1068–1087 are compositionally biased toward polar residues; it reads DFSFDQNTDLRSSTNSLTIG. A compositionally biased stretch (low complexity) spans 1088–1118; sequence SNSNFSSLKNSLNLENPENNNNPDKNVDNNN. 2 stretches are compositionally biased toward low complexity: residues 1225–1249 and 1257–1291; these read DNNNSSSNNNNNNLKNSNSNNSLRN and NISNNNNNNNNNNNNNNNNNNNNNNNNNNNNNNNE. Residues 1362 to 1373 are compositionally biased toward basic and acidic residues; that stretch reads RHKDSIGDKEMD.

This is an uncharacterized protein from Dictyostelium discoideum (Social amoeba).